A 147-amino-acid polypeptide reads, in one-letter code: Large ribosomal subunit protein bL9 (147 aa).

This sequence belongs to the bacterial ribosomal protein bL9 family.

Its function is as follows. Binds to the 23S rRNA. The chain is Large ribosomal subunit protein bL9 from Clostridium acetobutylicum (strain ATCC 824 / DSM 792 / JCM 1419 / IAM 19013 / LMG 5710 / NBRC 13948 / NRRL B-527 / VKM B-1787 / 2291 / W).